Reading from the N-terminus, the 112-residue chain is Small ribosomal subunit protein bS16 (112 aa).

The protein belongs to the bacterial ribosomal protein bS16 family.

In Aquifex aeolicus (strain VF5), this protein is Small ribosomal subunit protein bS16.